We begin with the raw amino-acid sequence, 140 residues long: Large ribosomal subunit protein bL17 (140 aa).

Residues 119-140 (DTTAKGQDSGPVQVEEQENEEA) form a disordered region.

It belongs to the bacterial ribosomal protein bL17 family. Part of the 50S ribosomal subunit. Contacts protein L32.

The chain is Large ribosomal subunit protein bL17 from Zymomonas mobilis subsp. mobilis (strain ATCC 31821 / ZM4 / CP4).